The following is a 135-amino-acid chain: Large ribosomal subunit protein eL27y (135 aa).

It belongs to the eukaryotic ribosomal protein eL27 family.

The sequence is that of Large ribosomal subunit protein eL27y (RPL27B) from Arabidopsis thaliana (Mouse-ear cress).